The primary structure comprises 218 residues: Large ribosomal subunit protein uL3 (218 aa).

The disordered stretch occupies residues 126–169 (HGFSRGPMTHGSKNHRQPGSIGAGTTPGRIYPGKRMSGRYGGKK).

This sequence belongs to the universal ribosomal protein uL3 family. In terms of assembly, part of the 50S ribosomal subunit. Forms a cluster with proteins L14 and L19.

In terms of biological role, one of the primary rRNA binding proteins, it binds directly near the 3'-end of the 23S rRNA, where it nucleates assembly of the 50S subunit. The sequence is that of Large ribosomal subunit protein uL3 from Synechococcus sp. (strain CC9902).